The following is a 312-amino-acid chain: tRNA dimethylallyltransferase (312 aa).

15-22 (GPTAAGKS) serves as a coordination point for ATP. Substrate is bound at residue 17–22 (TAAGKS). Positions 40 to 43 (DSMQ) are interaction with substrate tRNA.

This sequence belongs to the IPP transferase family. Monomer. The cofactor is Mg(2+).

The catalysed reaction is adenosine(37) in tRNA + dimethylallyl diphosphate = N(6)-dimethylallyladenosine(37) in tRNA + diphosphate. Functionally, catalyzes the transfer of a dimethylallyl group onto the adenine at position 37 in tRNAs that read codons beginning with uridine, leading to the formation of N6-(dimethylallyl)adenosine (i(6)A). This Streptomyces coelicolor (strain ATCC BAA-471 / A3(2) / M145) protein is tRNA dimethylallyltransferase.